Consider the following 528-residue polypeptide: Cytoplasmic tRNA 2-thiolation protein 2 (528 aa).

Disordered regions lie at residues 1–23 and 196–219; these read MCQA…PRPS and PAQG…GHPK. N-acetylcysteine is present on Cys2. A compositionally biased stretch (polar residues) spans 197-212; sequence AQGQGQLRPSHSQEPS. Ser416 carries the post-translational modification Phosphoserine. A disordered region spans residues 504–528; that stretch reads EEEEEDRAEPCEAMKQEAEDKGIGL. A compositionally biased stretch (basic and acidic residues) spans 511-528; the sequence is AEPCEAMKQEAEDKGIGL.

It belongs to the CTU2/NCS2 family. As to quaternary structure, component of a complex at least composed of URM1, CTU2/NCS2 and CTU1/ATPBD3.

Its subcellular location is the cytoplasm. It functions in the pathway tRNA modification; 5-methoxycarbonylmethyl-2-thiouridine-tRNA biosynthesis. Plays a central role in 2-thiolation of mcm(5)S(2)U at tRNA wobble positions of tRNA(Lys), tRNA(Glu) and tRNA(Gln). May act by forming a heterodimer with CTU1/ATPBD3 that ligates sulfur from thiocarboxylated URM1 onto the uridine of tRNAs at wobble position. In Rattus norvegicus (Rat), this protein is Cytoplasmic tRNA 2-thiolation protein 2 (Ctu2).